The chain runs to 389 residues: Lipid-A-disaccharide synthase (389 aa).

The protein belongs to the LpxB family.

It carries out the reaction a lipid X + a UDP-2-N,3-O-bis[(3R)-3-hydroxyacyl]-alpha-D-glucosamine = a lipid A disaccharide + UDP + H(+). It functions in the pathway bacterial outer membrane biogenesis; LPS lipid A biosynthesis. In terms of biological role, condensation of UDP-2,3-diacylglucosamine and 2,3-diacylglucosamine-1-phosphate to form lipid A disaccharide, a precursor of lipid A, a phosphorylated glycolipid that anchors the lipopolysaccharide to the outer membrane of the cell. The polypeptide is Lipid-A-disaccharide synthase (Burkholderia ambifaria (strain MC40-6)).